The chain runs to 593 residues: Aspartate--tRNA(Asp/Asn) ligase (593 aa).

Residue E172 participates in L-aspartate binding. Positions 196–199 (QLFK) are aspartate. R218 is an L-aspartate binding site. Residues 218–220 (RDE) and Q227 contribute to the ATP site. Residue H450 coordinates L-aspartate. E484 contributes to the ATP binding site. R491 provides a ligand contact to L-aspartate. Position 536–539 (536–539 (GLDR)) interacts with ATP.

The protein belongs to the class-II aminoacyl-tRNA synthetase family. Type 1 subfamily. In terms of assembly, homodimer.

The protein localises to the cytoplasm. The enzyme catalyses tRNA(Asx) + L-aspartate + ATP = L-aspartyl-tRNA(Asx) + AMP + diphosphate. Functionally, aspartyl-tRNA synthetase with relaxed tRNA specificity since it is able to aspartylate not only its cognate tRNA(Asp) but also tRNA(Asn). Reaction proceeds in two steps: L-aspartate is first activated by ATP to form Asp-AMP and then transferred to the acceptor end of tRNA(Asp/Asn). In Nitrosomonas eutropha (strain DSM 101675 / C91 / Nm57), this protein is Aspartate--tRNA(Asp/Asn) ligase.